Reading from the N-terminus, the 244-residue chain is Dihydropteridine reductase (244 aa).

An N-acetylalanine modification is found at A2. Position 14–38 (14–38 (LVYGGRGALGSRCVQAFRARNWWVA)) interacts with NADP(+). Residues K73, K79, K96, and K102 each carry the N6-succinyllysine modification. Y150 functions as the Proton acceptor in the catalytic mechanism.

It belongs to the short-chain dehydrogenases/reductases (SDR) family. As to quaternary structure, homodimer.

The catalysed reaction is 5,6,7,8-tetrahydropteridine + NAD(+) = 6,7-dihydropteridine + NADH + H(+). It catalyses the reaction 5,6,7,8-tetrahydropteridine + NADP(+) = 6,7-dihydropteridine + NADPH + H(+). Catalyzes the conversion of quinonoid dihydrobiopterin into tetrahydrobiopterin. This is Dihydropteridine reductase (QDPR) from Homo sapiens (Human).